The primary structure comprises 315 residues: Protease HtpX homolog (315 aa).

A helical membrane pass occupies residues 16 to 36; that stretch reads LFMGIGYLIGGASGALIALVV. Residue H130 participates in Zn(2+) binding. Residue E131 is part of the active site. Position 134 (H134) interacts with Zn(2+). A run of 2 helical transmembrane segments spans residues 145–165 and 172–192; these read ITAT…FFGG and GPGL…AMLV. E201 is a binding site for Zn(2+). A disordered region spans residues 282–315; the sequence is GGGGASIGRPAGPSPRGAPRSPWSGQPRARGPWG. Over residues 288-303 the composition is skewed to low complexity; sequence IGRPAGPSPRGAPRSP.

It belongs to the peptidase M48B family. Zn(2+) serves as cofactor.

It localises to the cell inner membrane. This chain is Protease HtpX homolog, found in Rhodopseudomonas palustris (strain BisB5).